The chain runs to 344 residues: Putative NAD(P)H nitroreductase MT3217 (344 aa).

FMN-binding positions include 40 to 44 (QPWRW) and Arg-326.

This sequence belongs to the nitroreductase family. Interacts with human TLR2. FMN serves as cofactor.

Stimulates pro-inflammatory cytokine expression via TLR2 signaling pathway. Activation of TLR2 results in the phosphorylation and activation of NF-kappa-B. Also induces TLR2 expression. May influence the innate immune responses to facilitate the survival of M.tuberculosis in the granulomatous microenvironment. The polypeptide is Putative NAD(P)H nitroreductase MT3217 (Mycobacterium tuberculosis (strain CDC 1551 / Oshkosh)).